Consider the following 599-residue polypeptide: Elongation factor 4 (599 aa).

Residues 2-184 (KNIRNFSIIA…RLVRDIPPPE (183 aa)) form the tr-type G domain. GTP is bound by residues 14–19 (DHGKST) and 131–134 (NKID).

This sequence belongs to the TRAFAC class translation factor GTPase superfamily. Classic translation factor GTPase family. LepA subfamily.

It localises to the cell inner membrane. The catalysed reaction is GTP + H2O = GDP + phosphate + H(+). Its function is as follows. Required for accurate and efficient protein synthesis under certain stress conditions. May act as a fidelity factor of the translation reaction, by catalyzing a one-codon backward translocation of tRNAs on improperly translocated ribosomes. Back-translocation proceeds from a post-translocation (POST) complex to a pre-translocation (PRE) complex, thus giving elongation factor G a second chance to translocate the tRNAs correctly. Binds to ribosomes in a GTP-dependent manner. The chain is Elongation factor 4 from Sodalis glossinidius (strain morsitans).